A 132-amino-acid chain; its full sequence is Myelin P2 protein (132 aa).

At S2 the chain carries N-acetylserine. Position 107 (R107) interacts with (9Z)-octadecenoate. R107 lines the hexadecanoate pocket. A disulfide bridge connects residues C118 and C125. 127–129 (RIY) contacts (9Z)-octadecenoate. 127 to 129 (RIY) is a binding site for hexadecanoate.

This sequence belongs to the calycin superfamily. Fatty-acid binding protein (FABP) family. Monomer.

The protein localises to the cytoplasm. Its function is as follows. May play a role in lipid transport protein in Schwann cells. May bind cholesterol. The protein is Myelin P2 protein (PMP2) of Bos taurus (Bovine).